A 430-amino-acid polypeptide reads, in one-letter code: Zinc carboxypeptidase A 1 (430 aa).

The signal sequence occupies residues 1 to 22; the sequence is MSLNKCLLFALLAIVASASVSA. The Peptidase M14 domain occupies 124 to 423; sequence QYYELDDTYA…DSIVAMATEV (300 aa). 2 residues coordinate Zn(2+): His-187 and Glu-190. A disulfide bridge connects residues Cys-252 and Cys-275. Position 311 (His-311) interacts with Zn(2+). Catalysis depends on Glu-386, which acts as the Proton donor/acceptor.

Belongs to the peptidase M14 family. Zn(2+) serves as cofactor.

The protein localises to the secreted. In Drosophila melanogaster (Fruit fly), this protein is Zinc carboxypeptidase A 1.